Here is a 943-residue protein sequence, read N- to C-terminus: Protein translocase subunit SecA (943 aa).

ATP-binding positions include Q90, 108 to 112, and D509; that span reads GEGKT. The interval 534–576 is disordered; the sequence is KPDNEHKPPIPQQRSSKAGGGFASKSESISNKNSKSSGASLFP. A compositionally biased stretch (low complexity) spans 556–570; it reads ASKSESISNKNSKSS.

Belongs to the SecA family. Monomer and homodimer. Part of the essential Sec protein translocation apparatus which comprises SecA, SecYEG and auxiliary proteins SecDF. Other proteins may also be involved.

It is found in the cell inner membrane. The protein resides in the cellular thylakoid membrane. The protein localises to the cytoplasm. It carries out the reaction ATP + H2O + cellular proteinSide 1 = ADP + phosphate + cellular proteinSide 2.. Functionally, part of the Sec protein translocase complex. Interacts with the SecYEG preprotein conducting channel. Has a central role in coupling the hydrolysis of ATP to the transfer of proteins into and across the cell membrane, serving as an ATP-driven molecular motor driving the stepwise translocation of polypeptide chains across the membrane. Its function is as follows. Probably participates in protein translocation into and across both the cytoplasmic and thylakoid membranes in cyanobacterial cells. This is Protein translocase subunit SecA from Prochlorococcus marinus (strain MIT 9515).